The sequence spans 379 residues: UDP-N-acetylglucosamine--N-acetylmuramyl-(pentapeptide) pyrophosphoryl-undecaprenol N-acetylglucosamine transferase (379 aa).

Residues 10–12 (TGG), Asn124, and Arg165 each bind UDP-N-acetyl-alpha-D-glucosamine. Residues 174 to 195 (TRDQGPGIRDQEKHMTDSTGPA) form a disordered region. UDP-N-acetyl-alpha-D-glucosamine contacts are provided by Ser211, Ile266, and Gln311.

Belongs to the glycosyltransferase 28 family. MurG subfamily.

Its subcellular location is the cell inner membrane. It carries out the reaction di-trans,octa-cis-undecaprenyl diphospho-N-acetyl-alpha-D-muramoyl-L-alanyl-D-glutamyl-meso-2,6-diaminopimeloyl-D-alanyl-D-alanine + UDP-N-acetyl-alpha-D-glucosamine = di-trans,octa-cis-undecaprenyl diphospho-[N-acetyl-alpha-D-glucosaminyl-(1-&gt;4)]-N-acetyl-alpha-D-muramoyl-L-alanyl-D-glutamyl-meso-2,6-diaminopimeloyl-D-alanyl-D-alanine + UDP + H(+). It functions in the pathway cell wall biogenesis; peptidoglycan biosynthesis. Functionally, cell wall formation. Catalyzes the transfer of a GlcNAc subunit on undecaprenyl-pyrophosphoryl-MurNAc-pentapeptide (lipid intermediate I) to form undecaprenyl-pyrophosphoryl-MurNAc-(pentapeptide)GlcNAc (lipid intermediate II). This Pelobacter propionicus (strain DSM 2379 / NBRC 103807 / OttBd1) protein is UDP-N-acetylglucosamine--N-acetylmuramyl-(pentapeptide) pyrophosphoryl-undecaprenol N-acetylglucosamine transferase.